The chain runs to 755 residues: Protein MTSS 1 (755 aa).

Residues 1-250 form the IMD domain; the sequence is MEAVIEKECS…EQVILDLKGS (250 aa). Residues 108-155 are a coiled coil; sequence LQEQMEEWKKVANQLDKDHAKEYKKARQEIKKKSSDTLKLQKKAKKGR. Disordered stretches follow at residues 139–159 and 255–305; these read KKSSDTLKLQKKAKKGRGDIQ and SYQT…RSSN. Position 258 is a phosphothreonine (T258). 4 positions are modified to phosphoserine: S261, S262, S271, and S322. Positions 327–351 are disordered; the sequence is QDAFQSKSPSPMPPEAPNQLSNGFS. T425 carries the post-translational modification Phosphothreonine. 3 disordered regions span residues 428 to 470, 490 to 513, and 563 to 755; these read RRKE…TRPG, DTQRSSRDSLQCSSGYSTQTTTPC, and QAKR…PRFS. Positions 443–453 are enriched in low complexity; it reads TTASGPPAAAE. Phosphothreonine is present on T603. Residues 608 to 623 are compositionally biased toward low complexity; the sequence is PIPIKTPVIPVKTPTV. S644 and S647 each carry phosphoserine. Polar residues predominate over residues 656 to 671; the sequence is GVTSMPSSMWSGQASV. The WH2 domain occupies 727–744; sequence QGEDMLNAIRRGVKLKKT.

It belongs to the MTSS family. Binds to actin. Binds to the cytoplasmic domain of receptor protein tyrosine phosphatase delta. Expressed in many tissues, including spleen, thymus, prostate, testis, uterus, colon, and peripheral blood.

Its subcellular location is the cytoplasm. It is found in the cytoskeleton. Functionally, may be related to cancer progression or tumor metastasis in a variety of organ sites, most likely through an interaction with the actin cytoskeleton. The chain is Protein MTSS 1 from Homo sapiens (Human).